The sequence spans 160 residues: MAINEPEFATAVAVATKKRTFKKFSFRGFNVDALLKMSNVDLAKLFNARVRRRFYRGLKKQPLILIKKLRRAKKEASDENKMKPEVVKTHLRNMIIVPEMIGSVVGVHNGKKFNEIVIKPEMIGHYLAEFSMTCKKVNHHRPRICGCCCFRRSTRFIPLR.

Belongs to the universal ribosomal protein uS19 family.

It localises to the cytoplasm. This is Small ribosomal subunit protein uS19v (RPS15F) from Arabidopsis thaliana (Mouse-ear cress).